A 492-amino-acid polypeptide reads, in one-letter code: Asparagine--tRNA ligase, mitochondrial (492 aa).

It belongs to the class-II aminoacyl-tRNA synthetase family.

The protein localises to the mitochondrion matrix. The enzyme catalyses tRNA(Asn) + L-asparagine + ATP = L-asparaginyl-tRNA(Asn) + AMP + diphosphate + H(+). In terms of biological role, catalyzes the attachment of asparagine to tRNA(Asn) in the mitochondrion. In Saccharomyces cerevisiae (strain ATCC 204508 / S288c) (Baker's yeast), this protein is Asparagine--tRNA ligase, mitochondrial (SLM5).